A 432-amino-acid chain; its full sequence is Acyl-coenzyme A thioesterase 3 (432 aa).

Residues serine 243, aspartate 337, and histidine 371 each act as charge relay system in the active site. Residues 430 to 432 carry the Microbody targeting signal motif; the sequence is AKL.

This sequence belongs to the C/M/P thioester hydrolase family. As to expression, widely expressed. Highly expressed in the kidney, expressed at low level in the liver. Isoform 2 is expressed in the kidney, but not in the liver. Isoform 1 is liver-specific. Highly expressed in kidney (at protein level).

Its subcellular location is the peroxisome. It catalyses the reaction hexadecanoyl-CoA + H2O = hexadecanoate + CoA + H(+). The enzyme catalyses decanoyl-CoA + H2O = decanoate + CoA + H(+). The catalysed reaction is dodecanoyl-CoA + H2O = dodecanoate + CoA + H(+). It carries out the reaction tetradecanoyl-CoA + H2O = tetradecanoate + CoA + H(+). It catalyses the reaction octadecanoyl-CoA + H2O = octadecanoate + CoA + H(+). The enzyme catalyses eicosanoyl-CoA + H2O = eicosanoate + CoA + H(+). The catalysed reaction is (9Z)-octadecenoyl-CoA + H2O = (9Z)-octadecenoate + CoA + H(+). It carries out the reaction (9Z,12Z)-octadecadienoyl-CoA + H2O = (9Z,12Z)-octadecadienoate + CoA + H(+). It catalyses the reaction (5Z,8Z,11Z,14Z)-eicosatetraenoyl-CoA + H2O = (5Z,8Z,11Z,14Z)-eicosatetraenoate + CoA + H(+). The enzyme catalyses tetracosanoyl-CoA + H2O = tetracosanoate + CoA + H(+). The catalysed reaction is hexacosanoyl-CoA + H2O = hexacosanoate + CoA + H(+). It carries out the reaction docosanoyl-CoA + H2O = docosanoate + CoA + H(+). It catalyses the reaction (9Z)-hexadecenoyl-CoA + H2O = (9Z)-hexadecenoate + CoA + H(+). It functions in the pathway lipid metabolism; fatty acid metabolism. Catalyzes the hydrolysis of acyl-CoAs into free fatty acids and coenzyme A (CoASH), regulating their respective intracellular levels. Mainly active on long-chain acyl-CoAs. May have a function in termination of beta-oxidation of fatty acids. The polypeptide is Acyl-coenzyme A thioesterase 3 (Acot3) (Mus musculus (Mouse)).